Here is a 1014-residue protein sequence, read N- to C-terminus: Probable transport protein MmpL11 (1014 aa).

12 helical membrane-spanning segments follow: residues 13 to 33, 156 to 173, 188 to 208, 235 to 255, 279 to 299, 311 to 331, 373 to 393, 530 to 550, 560 to 580, 598 to 618, 649 to 669, and 671 to 691; these read WLVFTGWLLALVPAIYLAMTQ, VRLYVIGQGALSAAVAAN, IILIVLLAVFGSLAAAAVPLA, TSTVSMFGIALAVDYSLFILM, GLAVVLSGMTVIASLTGIYLI, AILAVAIAMLASITLTPAALA, ASAASTILIIMATPVTSMMLG, TEPLMLVFVALIAFVMLLISI, VLMTLLSVAAAYGSLVMVFQW, VPPLVLAMTFGLSMDYEIFLL, AALIMIAVFVGFAFAGMPLVA, and IGVACAVAIAVDVTAVRLVLV. The disordered stretch occupies residues 783–802; that stretch reads SDRVLPGAATQESEEDPAMG.

The protein belongs to the resistance-nodulation-cell division (RND) (TC 2.A.6) family. MmpL subfamily.

It is found in the cell membrane. This Mycobacterium leprae (strain TN) protein is Probable transport protein MmpL11 (mmpL11).